Here is a 219-residue protein sequence, read N- to C-terminus: Cytidylate kinase (219 aa).

10–18 (GPAAAGKST) provides a ligand contact to ATP.

The protein belongs to the cytidylate kinase family. Type 1 subfamily.

The protein resides in the cytoplasm. The enzyme catalyses CMP + ATP = CDP + ADP. The catalysed reaction is dCMP + ATP = dCDP + ADP. The sequence is that of Cytidylate kinase from Staphylococcus aureus (strain MRSA252).